Reading from the N-terminus, the 295-residue chain is Ribosomal protein L11 methyltransferase (295 aa).

4 residues coordinate S-adenosyl-L-methionine: T146, G167, D189, and N231.

This sequence belongs to the methyltransferase superfamily. PrmA family.

Its subcellular location is the cytoplasm. The enzyme catalyses L-lysyl-[protein] + 3 S-adenosyl-L-methionine = N(6),N(6),N(6)-trimethyl-L-lysyl-[protein] + 3 S-adenosyl-L-homocysteine + 3 H(+). Methylates ribosomal protein L11. The sequence is that of Ribosomal protein L11 methyltransferase from Vibrio parahaemolyticus serotype O3:K6 (strain RIMD 2210633).